A 493-amino-acid polypeptide reads, in one-letter code: Transcript termination protein A18 (493 aa).

One can recognise a Helicase ATP-binding domain in the interval 100-256 (MIELKRPLYI…NSIINIAKLS (157 aa)). An ATP-binding site is contributed by 113 to 120 (LACGFGKT). Positions 206–209 (DESH) match the DESH box motif. One can recognise a Helicase C-terminal domain in the interval 309-456 (ILDTLVEEFK…IISLSVDKLG (148 aa)).

It belongs to the helicase family. Poxviruses subfamily. Interacts with G2. Might be part of a transcription complex composed at least of G2, A18, and H5.

The protein resides in the virion. Its function is as follows. DNA helicase which seems to act as a postreplicative transcription termination factor. Involved in ATP-dependent release of nascent RNA. Forms a stable complex with single-stranded DNA, and to a lesser extent RNA. The sequence is that of Transcript termination protein A18 from Mus musculus (Mouse).